The following is a 304-amino-acid chain: Trypsin-3 (304 aa).

A Peptidase S1 domain is found at 81–301 (IVGGYTCEEN…YVDWIKDTIA (221 aa)). Disulfide bonds link Cys87/Cys217, Cys105/Cys121, Cys196/Cys263, Cys228/Cys242, and Cys253/Cys277. His120 (charge relay system) is an active-site residue. The Ca(2+) site is built by Glu132, Asn134, Val137, Glu139, and Glu142. Residue Asp164 is the Charge relay system of the active site. Tyr211 carries the sulfotyrosine modification. The active-site Charge relay system is the Ser257.

The protein belongs to the peptidase S1 family. Requires Ca(2+) as cofactor. Detected in pancreas and pancreatic fluid (at protein level). Expressed in pancreas and brain. Detected in ileum.

The protein resides in the secreted. The enzyme catalyses Preferential cleavage: Arg-|-Xaa, Lys-|-Xaa.. Not inhibited by Kunitz-type trypsin inhibitors. In terms of biological role, digestive protease that cleaves proteins preferentially after an Arg residue and has proteolytic activity toward Kunitz-type trypsin inhibitors. This is Trypsin-3 (PRSS3) from Homo sapiens (Human).